Here is a 351-residue protein sequence, read N- to C-terminus: Signal recognition particle receptor FtsY (351 aa).

GTP contacts are provided by residues 152 to 159 (GVNGSGKT), 235 to 239 (DTAGR), and 299 to 302 (TKMD).

The protein belongs to the GTP-binding SRP family. FtsY subfamily. In terms of assembly, part of the signal recognition particle protein translocation system, which is composed of SRP and FtsY.

Its subcellular location is the cell membrane. The protein resides in the cytoplasm. The catalysed reaction is GTP + H2O = GDP + phosphate + H(+). In terms of biological role, involved in targeting and insertion of nascent membrane proteins into the cytoplasmic membrane. Acts as a receptor for the complex formed by the signal recognition particle (SRP) and the ribosome-nascent chain (RNC). The protein is Signal recognition particle receptor FtsY of Metamycoplasma hominis (strain ATCC 23114 / DSM 25592 / NBRC 14850 / NCTC 10111 / PG21) (Mycoplasma hominis).